A 319-amino-acid polypeptide reads, in one-letter code: MAFMSMERSTWAFTFGILGNLISLMVFLSPLPTFYRVYRKKSTEGFQSTPYVVTLFSCMLWMYYAFVKSGAELLVTINGVGCVIETVYLAMYLAYAPKSARMLTAKMLLGLNIGLFGVIALVTLLLSRGELRVHVLGWICVAVSLSVFAAPLSIIRLVIRTKSVEFMPFSLSFFLVLSAVIWFLYGLLKKDVFVALPNVLGFVFGVAQMALYMAYRSKKPLVASSSSAAVAAGLETKLPEHVKEVQAVAKGAVAAAPEGRISCGAEVHPIDDVMPSEVVEVKVDDEETNRTDEMAGDGDHAMVRTEQIIKPDMAIVVEV.

The Extracellular segment spans residues 1 to 10 (MAFMSMERST). A helical transmembrane segment spans residues 11–31 (WAFTFGILGNLISLMVFLSPL). One can recognise a MtN3/slv 1 domain in the interval 13-99 (FTFGILGNLI…AMYLAYAPKS (87 aa)). At 32–50 (PTFYRVYRKKSTEGFQSTP) the chain is on the cytoplasmic side. The helical transmembrane segment at 51–71 (YVVTLFSCMLWMYYAFVKSGA) threads the bilayer. Glu72 is a topological domain (extracellular). A helical membrane pass occupies residues 73–93 (LLVTINGVGCVIETVYLAMYL). Over 94–106 (AYAPKSARMLTAK) the chain is Cytoplasmic. The chain crosses the membrane as a helical span at residues 107–127 (MLLGLNIGLFGVIALVTLLLS). At 128-134 (RGELRVH) the chain is on the extracellular side. Residues 135–155 (VLGWICVAVSLSVFAAPLSII) traverse the membrane as a helical segment. Positions 135 to 219 (VLGWICVAVS…ALYMAYRSKK (85 aa)) constitute a MtN3/slv 2 domain. At 156–167 (RLVIRTKSVEFM) the chain is on the cytoplasmic side. Residues 168–188 (PFSLSFFLVLSAVIWFLYGLL) form a helical membrane-spanning segment. Topologically, residues 189 to 191 (KKD) are extracellular. A helical membrane pass occupies residues 192 to 212 (VFVALPNVLGFVFGVAQMALY). The Cytoplasmic segment spans residues 213-319 (MAYRSKKPLV…KPDMAIVVEV (107 aa)).

This sequence belongs to the SWEET sugar transporter family. Forms homooligomers and/or heterooligomers.

The protein localises to the cell membrane. In terms of biological role, mediates both low-affinity uptake and efflux of sugar across the plasma membrane. The sequence is that of Bidirectional sugar transporter SWEET15 (SWEET15) from Oryza sativa subsp. indica (Rice).